Consider the following 327-residue polypeptide: MKKLTLLETELAIKYIKDLFQNALSKELNLLRVSAPLIIAPDSGLNDNLNGWEAPVSFKSKTNGVSSQVVQSLAKWKRYSIARYEIPLYQGLYTDMNAIRMDETLDATHSMYVDQWDWELRISENDRNVEFLKNTVNKIYKVLKEAQLKVNEKYGIFEQKDLLPEHIHFVTTQELLDQYPDKNPSEREQLVCEKYKAVFVMQVGKKLSNNQVHDGRSPDYDDWSLNGDIMVYNPRSKKALELSSMGIRVNKEVLLKQLEESKQNERLELMFHKKLVNGELHQTIGGGIGQSRLCYFLLQKDHIGEVQASHWSDEIVVEAKAKGIKLL.

This sequence belongs to the class-II aminoacyl-tRNA synthetase family. AsnA subfamily.

It is found in the cytoplasm. It carries out the reaction L-aspartate + NH4(+) + ATP = L-asparagine + AMP + diphosphate + H(+). It functions in the pathway amino-acid biosynthesis; L-asparagine biosynthesis; L-asparagine from L-aspartate (ammonia route): step 1/1. This Mycoplasmoides gallisepticum (strain R(low / passage 15 / clone 2)) (Mycoplasma gallisepticum) protein is Aspartate--ammonia ligase.